The chain runs to 658 residues: Vertnin (658 aa).

Belongs to the vertnin family.

The protein resides in the nucleus. Acts as a transcription factor that regulates development of thoracic vertebrae. The chain is Vertnin (VRTN) from Bos taurus (Bovine).